We begin with the raw amino-acid sequence, 64 residues long: Large ribosomal subunit protein bL35 (64 aa).

The disordered stretch occupies residues M1–H43.

Belongs to the bacterial ribosomal protein bL35 family.

This chain is Large ribosomal subunit protein bL35, found in Mesoplasma florum (strain ATCC 33453 / NBRC 100688 / NCTC 11704 / L1) (Acholeplasma florum).